The following is a 120-amino-acid chain: Ribonuclease P protein component (120 aa).

It belongs to the RnpA family. Consists of a catalytic RNA component (M1 or rnpB) and a protein subunit.

It carries out the reaction Endonucleolytic cleavage of RNA, removing 5'-extranucleotides from tRNA precursor.. RNaseP catalyzes the removal of the 5'-leader sequence from pre-tRNA to produce the mature 5'-terminus. It can also cleave other RNA substrates such as 4.5S RNA. The protein component plays an auxiliary but essential role in vivo by binding to the 5'-leader sequence and broadening the substrate specificity of the ribozyme. This is Ribonuclease P protein component from Microcystis aeruginosa (strain NIES-843 / IAM M-2473).